We begin with the raw amino-acid sequence, 427 residues long: Serine/arginine (SR)-type shuttling mRNA binding protein GBP2 (427 aa).

Positions 1-101 are disordered; sequence MERELGMYGN…GRGGGRGRTL (101 aa). Over residues 22-32 the composition is skewed to basic and acidic residues; that stretch reads RLSDDRDRYDD. The residue at position 24 (serine 24) is a Phosphoserine. Low complexity predominate over residues 35 to 44; that stretch reads DSSSNNGNGS. The segment covering 50–60 has biased composition (basic and acidic residues); that stretch reads DRGSRFNDRYD. RRM domains are found at residues 122 to 198 and 219 to 296; these read NSIF…QDNP and FEVF…EGRF. A Phosphothreonine modification is found at threonine 130. The segment covering 300 to 317 has biased composition (basic and acidic residues); that stretch reads KNNDRYNQRREDLEDTRG. The interval 300–319 is disordered; the sequence is KNNDRYNQRREDLEDTRGTE. Residues 349 to 426 form the RRM 3 domain; that stretch reads CFIYCSNLPF…CSLQISYARR (78 aa).

Post-translationally, methylated by HMT1.

The protein localises to the cytoplasm. The protein resides in the nucleus. It localises to the chromosome. It is found in the telomere. Its subcellular location is the P-body. The protein localises to the stress granule. In terms of biological role, binds to intron-containing transcripts and is involved in quality control for the export of spliced mRNAs from the nucleus. Binds to pre-mRNAs until splicing is completed or until faulty mRNAs are degraded. On correctly spliced mRNAs, GBP2 and HRB1 recruit MEX67 to allow nuclear export. On faulty mRNAs, GBP2 and HRB1 associate with the TRAMP complex that guides those pre-mRNAs to the exosome for degradation. Binds single-stranded telomeric sequences of the type (TG[1-3])n in vitro. Influences the localization of RAP1 in the nuclei. Involved in modulating telomere length. The sequence is that of Serine/arginine (SR)-type shuttling mRNA binding protein GBP2 from Saccharomyces cerevisiae (strain ATCC 204508 / S288c) (Baker's yeast).